The primary structure comprises 671 residues: DNA ligase (671 aa).

NAD(+) is bound by residues 31–35 (DAEYD), 80–81 (SL), and Glu110. The active-site N6-AMP-lysine intermediate is Lys112. Residues Arg133, Glu167, Lys283, and Lys307 each coordinate NAD(+). Zn(2+) is bound by residues Cys401, Cys404, Cys419, and Cys424. The BRCT domain maps to 587–671 (EEELVFAGKT…YLPDEGGLNE (85 aa)).

It belongs to the NAD-dependent DNA ligase family. LigA subfamily. Requires Mg(2+) as cofactor. It depends on Mn(2+) as a cofactor.

It carries out the reaction NAD(+) + (deoxyribonucleotide)n-3'-hydroxyl + 5'-phospho-(deoxyribonucleotide)m = (deoxyribonucleotide)n+m + AMP + beta-nicotinamide D-nucleotide.. Functionally, DNA ligase that catalyzes the formation of phosphodiester linkages between 5'-phosphoryl and 3'-hydroxyl groups in double-stranded DNA using NAD as a coenzyme and as the energy source for the reaction. It is essential for DNA replication and repair of damaged DNA. This chain is DNA ligase, found in Listeria monocytogenes serotype 4a (strain HCC23).